The following is a 490-amino-acid chain: Sulfate adenylyltransferase (490 aa).

The tract at residues 1–165 (MTKALLKDLN…LQAVTPIRHF (165 aa)) is N-terminal. The tract at residues 166 to 390 (DFVEYRYSPA…LRQSYPPKYS (225 aa)) is catalytic. Sulfate is bound at residue glutamine 193. ATP-binding positions include 193-196 (QTRN) and 287-290 (GRDH). Residues threonine 194, arginine 195, and asparagine 196 contribute to the active site. Arginine 195 contacts sulfate. Alanine 291 contacts sulfate. Position 329 (methionine 329) interacts with ATP. Residue threonine 356 is modified to Phosphothreonine. Positions 391-490 (QGFVLAVPAT…LSQLSDEGYL (100 aa)) are required for oligomerization; adenylyl-sulfate kinase-like.

It belongs to the sulfate adenylyltransferase family. In terms of assembly, homohexamer. Dimer of trimers.

It is found in the cytoplasm. It catalyses the reaction sulfate + ATP + H(+) = adenosine 5'-phosphosulfate + diphosphate. The protein operates within sulfur metabolism; hydrogen sulfide biosynthesis; sulfite from sulfate: step 1/3. Functionally, catalyzes the first intracellular reaction of sulfate assimilation, forming adenosine-5'-phosphosulfate (APS) from inorganic sulfate and ATP. Plays an important role in sulfate activation as a component of the biosynthesis pathway of sulfur-containing amino acids. This Schizosaccharomyces pombe (strain 972 / ATCC 24843) (Fission yeast) protein is Sulfate adenylyltransferase (sua1).